The chain runs to 556 residues: 5-aminolevulinate synthase, mitochondrial (556 aa).

Residues 1–46 constitute a mitochondrion transit peptide; that stretch reads MDSLARQSAKICPFVSRVTSSMQQVQVLHKTNMSAMAQQCPVMRRA. Substrate contacts are provided by R105, S218, and K237. Residues S270, H298, and T342 each contribute to the pyridoxal 5'-phosphate site. The active site involves K345. The residue at position 345 (K345) is an N6-(pyridoxal phosphate)lysine. Pyridoxal 5'-phosphate is bound by residues T374 and S375. T460 provides a ligand contact to substrate.

Belongs to the class-II pyridoxal-phosphate-dependent aminotransferase family. As to quaternary structure, homodimer. Pyridoxal 5'-phosphate is required as a cofactor.

It is found in the mitochondrion matrix. It carries out the reaction succinyl-CoA + glycine + H(+) = 5-aminolevulinate + CO2 + CoA. It participates in porphyrin-containing compound metabolism; protoporphyrin-IX biosynthesis; 5-aminolevulinate from glycine: step 1/1. Functionally, catalyzes the synthesis of 5-aminolevulinate (ALA) from succinyl-CoA and glycine, the first and rate-limiting step in heme biosynthesis. This chain is 5-aminolevulinate synthase, mitochondrial (HEM1), found in Eremothecium gossypii (strain ATCC 10895 / CBS 109.51 / FGSC 9923 / NRRL Y-1056) (Yeast).